The chain runs to 362 residues: sn-glycerol-3-phosphate import ATP-binding protein UgpC (362 aa).

The ABC transporter domain maps to Leu4–Ile235. Gly37–Ser44 is an ATP binding site.

The protein belongs to the ABC transporter superfamily. sn-glycerol-3-phosphate importer (TC 3.A.1.1.3) family. As to quaternary structure, the complex is composed of two ATP-binding proteins (UgpC), two transmembrane proteins (UgpA and UgpE) and a solute-binding protein (UgpB).

It is found in the cell inner membrane. The catalysed reaction is sn-glycerol 3-phosphate(out) + ATP + H2O = sn-glycerol 3-phosphate(in) + ADP + phosphate + H(+). Part of the ABC transporter complex UgpBAEC involved in sn-glycerol-3-phosphate (G3P) import. Responsible for energy coupling to the transport system. The protein is sn-glycerol-3-phosphate import ATP-binding protein UgpC of Bordetella pertussis (strain Tohama I / ATCC BAA-589 / NCTC 13251).